A 332-amino-acid chain; its full sequence is Biotin synthase (332 aa).

One can recognise a Radical SAM core domain in the interval 46–275; the sequence is YYGKKVKLNM…SKEIRISGGR (230 aa). 3 residues coordinate [4Fe-4S] cluster: C64, C68, and C71. C108, C140, C200, and R270 together coordinate [2Fe-2S] cluster.

This sequence belongs to the radical SAM superfamily. Biotin synthase family. As to quaternary structure, homodimer. [4Fe-4S] cluster is required as a cofactor. It depends on [2Fe-2S] cluster as a cofactor.

It carries out the reaction (4R,5S)-dethiobiotin + (sulfur carrier)-SH + 2 reduced [2Fe-2S]-[ferredoxin] + 2 S-adenosyl-L-methionine = (sulfur carrier)-H + biotin + 2 5'-deoxyadenosine + 2 L-methionine + 2 oxidized [2Fe-2S]-[ferredoxin]. It participates in cofactor biosynthesis; biotin biosynthesis; biotin from 7,8-diaminononanoate: step 2/2. Its function is as follows. Catalyzes the conversion of dethiobiotin (DTB) to biotin by the insertion of a sulfur atom into dethiobiotin via a radical-based mechanism. The chain is Biotin synthase from Lysinibacillus sphaericus (Bacillus sphaericus).